The following is a 211-amino-acid chain: PITH domain-containing protein CG6153 (211 aa).

The 173-residue stretch at 20–192 (DHALEMGIEY…GVTICNYESR (173 aa)) folds into the PITH domain.

It belongs to the PITHD1 family.

This Drosophila melanogaster (Fruit fly) protein is PITH domain-containing protein CG6153.